Reading from the N-terminus, the 269-residue chain is Type II iodothyronine deiodinase (269 aa).

Over 1-7 the chain is Lumenal; sequence MGLLSVD. The chain crosses the membrane as a helical; Signal-anchor for type III membrane protein span at residues 8–28; that stretch reads LLITLQILPWFFSNCLFLALY. Topologically, residues 29-269 are cytoplasmic; sequence DSVVLLKHVI…RUVPTCELIM (241 aa). Residue selenocysteine 128 is part of the active site. Residues selenocysteine 128 and selenocysteine 261 are each a non-standard amino acid (selenocysteine).

The protein belongs to the iodothyronine deiodinase family. In terms of assembly, predominantly monomer. Can form homodimers but homodimerization is not essential for enzyme activity.

The protein resides in the endoplasmic reticulum membrane. The catalysed reaction is 3,3',5-triiodo-L-thyronine + iodide + A + H(+) = L-thyroxine + AH2. It carries out the reaction 3,3'-diiodo-L-thyronine + iodide + A + H(+) = 3,3',5'-triiodo-L-thyronine + AH2. The enzyme catalyses 3'-iodo-L-thyronine + iodide + A + H(+) = 3',5'-diiodo-L-thyronine + AH2. It catalyses the reaction 3,3'-diiodothyronamine + iodide + A + H(+) = 3,3',5'-triiodothyronamine + AH2. The catalysed reaction is 3'-iodothyronamine + iodide + A + H(+) = 3',5'-diiodothyronamine + AH2. Functionally, plays a crucial role in the metabolism of thyroid hormones (TH) and has specific roles in TH activation and inactivation by deiodination. Catalyzes the deiodination of L-thyroxine (T4) to 3,5,3'-triiodothyronine (T3), 3,3',5'-triiodothyronine (rT3) to 3,3'-diiodothyronine (3,3'-T2) and 3',5'-diiodothyronine (3',5'-T2) to 3'-monoiodothyronine (3'-T1) via outer-ring deiodination (ORD). Catalyzes the phenolic ring deiodinations of 3,3',5'-triiodothyronamine and 3',5'- diiodothyronamine. The sequence is that of Type II iodothyronine deiodinase (dio2) from Neoceratodus forsteri (Australian lungfish).